The primary structure comprises 428 residues: Enolase (428 aa).

Glutamine 164 is a (2R)-2-phosphoglycerate binding site. The active-site Proton donor is the glutamate 206. The Mg(2+) site is built by aspartate 243, glutamate 286, and aspartate 313. The (2R)-2-phosphoglycerate site is built by lysine 338, arginine 367, serine 368, and lysine 389. Lysine 338 serves as the catalytic Proton acceptor.

Belongs to the enolase family. Mg(2+) is required as a cofactor.

The protein resides in the cytoplasm. It localises to the secreted. The protein localises to the cell surface. The enzyme catalyses (2R)-2-phosphoglycerate = phosphoenolpyruvate + H2O. It functions in the pathway carbohydrate degradation; glycolysis; pyruvate from D-glyceraldehyde 3-phosphate: step 4/5. Functionally, catalyzes the reversible conversion of 2-phosphoglycerate (2-PG) into phosphoenolpyruvate (PEP). It is essential for the degradation of carbohydrates via glycolysis. In Dehalococcoides mccartyi (strain ATCC BAA-2100 / JCM 16839 / KCTC 5957 / BAV1), this protein is Enolase.